The chain runs to 488 residues: Palmitoyltransferase ZDHHC14 (488 aa).

The Cytoplasmic segment spans residues 1–60 (MPPGGGGPMKDCEYSQISTHSSSPMESPHKKKKIAARRKWEVFPGRNKFFCNGRIMMARQ). A helical transmembrane segment spans residues 61–81 (TGVFYLTLVLILVTSGLFFAF). The Lumenal portion of the chain corresponds to 82-89 (DCPYLAVK). The helical transmembrane segment at 90–110 (ITPAIPAVAGILFFFVMGTLL) threads the bilayer. Over 111–208 (RTSFSDPGVL…GNCVGKRNYR (98 aa)) the chain is Cytoplasmic. Positions 165–215 (KYCFTCKIFRPPRASHCSLCDNCVERFDHHCPWVGNCVGKRNYRFFYMFIL) constitute a DHHC domain. C195 functions as the S-palmitoyl cysteine intermediate in the catalytic mechanism. Residues 209-229 (FFYMFILSLSFLTVFIFAFVI) form a helical membrane-spanning segment. The Lumenal segment spans residues 230-255 (THVILRSQQTGFLNALKDSPASVLEA). The helical transmembrane segment at 256 to 276 (VVCFFSVWSIVGLSGFHTYLI) threads the bilayer. The Cytoplasmic portion of the chain corresponds to 277–488 (SSNQTTNEDI…VRGLVKLSSV (212 aa)). S455 carries the phosphoserine modification.

It belongs to the DHHC palmitoyltransferase family. ERF2/ZDHHC9 subfamily. In terms of tissue distribution, widely expressed.

The protein localises to the endoplasmic reticulum membrane. The protein resides in the golgi apparatus. It localises to the golgi stack membrane. It carries out the reaction L-cysteinyl-[protein] + hexadecanoyl-CoA = S-hexadecanoyl-L-cysteinyl-[protein] + CoA. In terms of biological role, palmitoyltransferase that could catalyze the addition of palmitate onto various protein substrates. May have a palmitoyltransferase activity toward the beta-2 adrenergic receptor/ADRB2 and thereby regulate G protein-coupled receptor signaling. May play a role in cell differentiation and apoptosis. This is Palmitoyltransferase ZDHHC14 from Homo sapiens (Human).